The chain runs to 126 residues: Aspartate 1-decarboxylase (126 aa).

S25 functions as the Schiff-base intermediate with substrate; via pyruvic acid in the catalytic mechanism. S25 bears the Pyruvic acid (Ser) mark. Residue T57 participates in substrate binding. Residue Y58 is the Proton donor of the active site. 73–75 contributes to the substrate binding site; that stretch reads GAA.

Belongs to the PanD family. As to quaternary structure, heterooctamer of four alpha and four beta subunits. Pyruvate serves as cofactor. Is synthesized initially as an inactive proenzyme, which is activated by self-cleavage at a specific serine bond to produce a beta-subunit with a hydroxyl group at its C-terminus and an alpha-subunit with a pyruvoyl group at its N-terminus.

Its subcellular location is the cytoplasm. It carries out the reaction L-aspartate + H(+) = beta-alanine + CO2. It participates in cofactor biosynthesis; (R)-pantothenate biosynthesis; beta-alanine from L-aspartate: step 1/1. Catalyzes the pyruvoyl-dependent decarboxylation of aspartate to produce beta-alanine. This Nitrosococcus oceani (strain ATCC 19707 / BCRC 17464 / JCM 30415 / NCIMB 11848 / C-107) protein is Aspartate 1-decarboxylase.